The sequence spans 254 residues: Hydroxyacylglutathione hydrolase (254 aa).

Zn(2+)-binding residues include histidine 54, histidine 56, aspartate 58, histidine 59, histidine 111, aspartate 130, and histidine 168.

The protein belongs to the metallo-beta-lactamase superfamily. Glyoxalase II family. In terms of assembly, monomer. Zn(2+) serves as cofactor.

It carries out the reaction an S-(2-hydroxyacyl)glutathione + H2O = a 2-hydroxy carboxylate + glutathione + H(+). It functions in the pathway secondary metabolite metabolism; methylglyoxal degradation; (R)-lactate from methylglyoxal: step 2/2. Thiolesterase that catalyzes the hydrolysis of S-D-lactoyl-glutathione to form glutathione and D-lactic acid. The polypeptide is Hydroxyacylglutathione hydrolase (Legionella pneumophila (strain Paris)).